A 370-amino-acid chain; its full sequence is Phosphate acyltransferase (370 aa).

The segment at 349 to 370 (SAGRAGQDAPDEMAAPGRSEKR) is disordered.

Belongs to the PlsX family. In terms of assembly, homodimer. Probably interacts with PlsY.

The protein localises to the cytoplasm. It carries out the reaction a fatty acyl-[ACP] + phosphate = an acyl phosphate + holo-[ACP]. It functions in the pathway lipid metabolism; phospholipid metabolism. Its function is as follows. Catalyzes the reversible formation of acyl-phosphate (acyl-PO(4)) from acyl-[acyl-carrier-protein] (acyl-ACP). This enzyme utilizes acyl-ACP as fatty acyl donor, but not acyl-CoA. The sequence is that of Phosphate acyltransferase from Cereibacter sphaeroides (strain ATCC 17023 / DSM 158 / JCM 6121 / CCUG 31486 / LMG 2827 / NBRC 12203 / NCIMB 8253 / ATH 2.4.1.) (Rhodobacter sphaeroides).